The sequence spans 329 residues: 7,8-didemethyl-8-hydroxy-5-deazariboflavin synthase (329 aa).

The 235-residue stretch at 1–235 (MFIPVTNICR…SDVSVQVAPN (235 aa)) folds into the Radical SAM core domain. Cysteine 9, cysteine 13, and cysteine 16 together coordinate [4Fe-4S] cluster.

It belongs to the radical SAM superfamily. CofG family. As to quaternary structure, consists of two subunits, CofG and CofH. The cofactor is [4Fe-4S] cluster.

The catalysed reaction is 5-amino-5-(4-hydroxybenzyl)-6-(D-ribitylimino)-5,6-dihydrouracil + S-adenosyl-L-methionine = 7,8-didemethyl-8-hydroxy-5-deazariboflavin + 5'-deoxyadenosine + L-methionine + NH4(+) + H(+). Its pathway is cofactor biosynthesis; coenzyme F0 biosynthesis. Its function is as follows. Catalyzes the radical-mediated synthesis of 7,8-didemethyl-8-hydroxy-5-deazariboflavin from 5-amino-5-(4-hydroxybenzyl)-6-(D-ribitylimino)-5,6-dihydrouracil. The chain is 7,8-didemethyl-8-hydroxy-5-deazariboflavin synthase from Methanosarcina acetivorans (strain ATCC 35395 / DSM 2834 / JCM 12185 / C2A).